We begin with the raw amino-acid sequence, 140 residues long: uncharacterized protein (140 aa).

18-25 provides a ligand contact to ATP; sequence GTNGSGKS.

This is an uncharacterized protein from Haemophilus influenzae (strain ATCC 51907 / DSM 11121 / KW20 / Rd).